Consider the following 252-residue polypeptide: Ribosomal RNA small subunit methyltransferase J (252 aa).

S-adenosyl-L-methionine-binding positions include 104–105 (RD), 120–121 (ER), and D174.

Belongs to the methyltransferase superfamily. RsmJ family.

It is found in the cytoplasm. The catalysed reaction is guanosine(1516) in 16S rRNA + S-adenosyl-L-methionine = N(2)-methylguanosine(1516) in 16S rRNA + S-adenosyl-L-homocysteine + H(+). Functionally, specifically methylates the guanosine in position 1516 of 16S rRNA. In Mannheimia succiniciproducens (strain KCTC 0769BP / MBEL55E), this protein is Ribosomal RNA small subunit methyltransferase J.